A 416-amino-acid polypeptide reads, in one-letter code: STAM-binding protein-like (416 aa).

A disordered region spans residues 214 to 244 (SYGTVQPHPPAVDRSLKPSSYGSNSSGVTSD). Over residues 230 to 243 (KPSSYGSNSSGVTS) the composition is skewed to low complexity. The region spanning 249 to 380 (VKIPRDVCCK…LTDYGMKEIG (132 aa)) is the MPN domain. Positions 327, 329, 340, 342, 382, 388, and 390 each coordinate Zn(2+). A JAMM motif motif is present at residues 327-340 (HTHPTQTAFLSSVD).

This sequence belongs to the peptidase M67C family. The cofactor is Zn(2+).

In terms of biological role, zinc metalloprotease that specifically cleaves 'Lys-63'-linked polyubiquitin chains. Does not cleave 'Lys-48'-linked polyubiquitin chains. Functions at the endosome and is able to oppose the ubiquitin-dependent sorting of receptors to lysosomes. The chain is STAM-binding protein-like (stambp) from Xenopus laevis (African clawed frog).